We begin with the raw amino-acid sequence, 201 residues long: Ras-related protein Ral-a (201 aa).

A GTP-binding site is contributed by 18–25 (GSGGVGKS). Residues 40-48 (YEPTKADSY) carry the Effector region motif. Residues 65 to 69 (DTAGQ) and 124 to 127 (NKCD) contribute to the GTP site. Position 198 is a cysteine methyl ester (cysteine 198). Cysteine 198 is lipidated: S-geranylgeranyl cysteine. Residues 199-201 (TLL) constitute a propeptide, removed in mature form.

The protein belongs to the small GTPase superfamily. Ras family.

The protein resides in the cell membrane. It localises to the cleavage furrow. The protein localises to the midbody. It is found in the midbody ring. It catalyses the reaction GTP + H2O = GDP + phosphate + H(+). In Drosophila melanogaster (Fruit fly), this protein is Ras-related protein Ral-a (Rala).